Reading from the N-terminus, the 319-residue chain is GTP 3',8-cyclase (319 aa).

The 224-residue stretch at 4–227 folds into the Radical SAM core domain; sequence KHGRKINYLR…VETEKSSTAL (224 aa). R13 provides a ligand contact to GTP. [4Fe-4S] cluster contacts are provided by C20 and C24. Y26 provides a ligand contact to S-adenosyl-L-methionine. [4Fe-4S] cluster is bound at residue C27. R63 serves as a coordination point for GTP. G67 is an S-adenosyl-L-methionine binding site. T94 serves as a coordination point for GTP. An S-adenosyl-L-methionine-binding site is contributed by S118. K155 lines the GTP pocket. M189 is an S-adenosyl-L-methionine binding site. [4Fe-4S] cluster is bound by residues C249 and C252. 254-256 is a binding site for GTP; that stretch reads RVR. C266 contacts [4Fe-4S] cluster.

This sequence belongs to the radical SAM superfamily. MoaA family. In terms of assembly, monomer and homodimer. It depends on [4Fe-4S] cluster as a cofactor.

It carries out the reaction GTP + AH2 + S-adenosyl-L-methionine = (8S)-3',8-cyclo-7,8-dihydroguanosine 5'-triphosphate + 5'-deoxyadenosine + L-methionine + A + H(+). It functions in the pathway cofactor biosynthesis; molybdopterin biosynthesis. Functionally, catalyzes the cyclization of GTP to (8S)-3',8-cyclo-7,8-dihydroguanosine 5'-triphosphate. The chain is GTP 3',8-cyclase from Clostridium botulinum (strain ATCC 19397 / Type A).